The primary structure comprises 232 residues: MSLIDTVRNTLVPVHREGYRFIAIFFVVSLALGFLWEPLMWIGFLLTAWCAYFFRDPERMTPIDDDLVISPADGTVSSVATVTPPEELGLGSEPMLRISVFMNVFNGHVNRAPMSGTVRRIAYRAGKFVNAELDKASQENERNGLVLETKHGQIGVVQIAGLVARRILCWTRESASLEAGERFGLIRFGSRLDVFLPAGAEPRVTVGQTATAGETVIAEFGSAKGPVISRRA.

Residue serine 190 is the Schiff-base intermediate with substrate; via pyruvic acid of the active site. Serine 190 carries the post-translational modification Pyruvic acid (Ser); by autocatalysis.

Belongs to the phosphatidylserine decarboxylase family. PSD-A subfamily. In terms of assembly, heterodimer of a large membrane-associated beta subunit and a small pyruvoyl-containing alpha subunit. Pyruvate serves as cofactor. Post-translationally, is synthesized initially as an inactive proenzyme. Formation of the active enzyme involves a self-maturation process in which the active site pyruvoyl group is generated from an internal serine residue via an autocatalytic post-translational modification. Two non-identical subunits are generated from the proenzyme in this reaction, and the pyruvate is formed at the N-terminus of the alpha chain, which is derived from the carboxyl end of the proenzyme. The post-translation cleavage follows an unusual pathway, termed non-hydrolytic serinolysis, in which the side chain hydroxyl group of the serine supplies its oxygen atom to form the C-terminus of the beta chain, while the remainder of the serine residue undergoes an oxidative deamination to produce ammonia and the pyruvoyl prosthetic group on the alpha chain.

It is found in the cell membrane. It carries out the reaction a 1,2-diacyl-sn-glycero-3-phospho-L-serine + H(+) = a 1,2-diacyl-sn-glycero-3-phosphoethanolamine + CO2. The protein operates within phospholipid metabolism; phosphatidylethanolamine biosynthesis; phosphatidylethanolamine from CDP-diacylglycerol: step 2/2. Functionally, catalyzes the formation of phosphatidylethanolamine (PtdEtn) from phosphatidylserine (PtdSer). This is Phosphatidylserine decarboxylase proenzyme from Sinorhizobium medicae (strain WSM419) (Ensifer medicae).